The following is a 955-amino-acid chain: Anion exchange protein 4 (955 aa).

Disordered regions lie at residues valine 20–proline 50, histidine 154–glutamine 190, and proline 331–glutamine 352. 4 helical membrane passes run alanine 387 to glycine 407, glycine 415 to glycine 435, valine 472 to valine 492, and phenylalanine 503 to alanine 523. Residues alanine 387–asparagine 955 are membrane (anion exchange). Residues asparagine 548 and asparagine 572 are each glycosylated (N-linked (GlcNAc...) asparagine). Helical transmembrane passes span valine 596 to alanine 616, phenylalanine 637 to methionine 657, proline 684 to methionine 704, leucine 730 to serine 750, leucine 785 to leucine 804, valine 811 to methionine 830, and leucine 871 to valine 891. Residues arginine 918–asparagine 955 are disordered. Residue asparagine 951 is glycosylated (N-linked (GlcNAc...) asparagine).

It belongs to the anion exchanger (TC 2.A.31) family. Highly expressed in kidney. Expressed in the outer medulla and the inner medulla in the kidney cortex. Only expressed in beta-intercalated cells.

It is found in the lateral cell membrane. The protein resides in the apical cell membrane. It localises to the basolateral cell membrane. The enzyme catalyses 2 hydrogencarbonate(out) + chloride(in) + Na(+)(out) = 2 hydrogencarbonate(in) + chloride(out) + Na(+)(in). It catalyses the reaction K(+)(in) + 2 hydrogencarbonate(in) + chloride(out) = K(+)(out) + 2 hydrogencarbonate(out) + chloride(in). It carries out the reaction Li(+)(in) + 2 hydrogencarbonate(in) + chloride(out) = Li(+)(out) + 2 hydrogencarbonate(out) + chloride(in). The catalysed reaction is Rb(+)(in) + 2 hydrogencarbonate(in) + chloride(out) = Rb(+)(out) + 2 hydrogencarbonate(out) + chloride(in). The enzyme catalyses Cs(+)(in) + 2 hydrogencarbonate(in) + chloride(out) = Cs(+)(out) + 2 hydrogencarbonate(out) + chloride(in). Electroneutral Cl(-)/HCO3(-) antiporter that favors chloride ion entry and efflux of hydrogencarbonate and sodium ion across the basolateral membrane and may participat in salivary secretion. Also mediates Cl(-)/HCO3(-) exchange activity in the presence of K(+) as well as Cs(+), Li(+), and Rb(+). Does not contribute to Cl(-)/HCO3(-) exchanger in the apical membrane of the upper villous epithelium. The polypeptide is Anion exchange protein 4 (Oryctolagus cuniculus (Rabbit)).